A 208-amino-acid chain; its full sequence is Uridine kinase (208 aa).

Position 11–18 (11–18) interacts with ATP; that stretch reads GGTGSGKS.

It belongs to the uridine kinase family.

The protein resides in the cytoplasm. The catalysed reaction is uridine + ATP = UMP + ADP + H(+). The enzyme catalyses cytidine + ATP = CMP + ADP + H(+). Its pathway is pyrimidine metabolism; CTP biosynthesis via salvage pathway; CTP from cytidine: step 1/3. It participates in pyrimidine metabolism; UMP biosynthesis via salvage pathway; UMP from uridine: step 1/1. This Clostridium perfringens (strain ATCC 13124 / DSM 756 / JCM 1290 / NCIMB 6125 / NCTC 8237 / Type A) protein is Uridine kinase.